A 490-amino-acid polypeptide reads, in one-letter code: Betaine aldehyde dehydrogenase (490 aa).

The K(+) site is built by T26, I27, and D93. NAD(+) is bound at residue G150–W152. Residue K162 is the Charge relay system of the active site. K176–E179 provides a ligand contact to NAD(+). V180 serves as a coordination point for K(+). G230–S233 is an NAD(+) binding site. L246 contacts K(+). The active-site Proton acceptor is the E252. Positions 254, 286, and 387 each coordinate NAD(+). C286 serves as the catalytic Nucleophile. C286 is modified (cysteine sulfenic acid (-SOH)). K457 and G460 together coordinate K(+). The Charge relay system role is filled by E464.

This sequence belongs to the aldehyde dehydrogenase family. As to quaternary structure, dimer of dimers. K(+) is required as a cofactor.

The enzyme catalyses betaine aldehyde + NAD(+) + H2O = glycine betaine + NADH + 2 H(+). It participates in amine and polyamine biosynthesis; betaine biosynthesis via choline pathway; betaine from betaine aldehyde: step 1/1. Involved in the biosynthesis of the osmoprotectant glycine betaine. Catalyzes the irreversible oxidation of betaine aldehyde to the corresponding acid. This is Betaine aldehyde dehydrogenase from Escherichia coli (strain SE11).